We begin with the raw amino-acid sequence, 579 residues long: 6-deoxy-6-sulfo-D-gluconate dehydratase (579 aa).

[4Fe-4S] cluster contacts are provided by cysteine 59, cysteine 127, and cysteine 200.

Belongs to the IlvD/Edd family. In terms of assembly, homodimer. Requires [4Fe-4S] cluster as cofactor.

The enzyme catalyses 6-deoxy-6-sulfo-D-gluconate = 2-dehydro-3,6-dideoxy-6-sulfo-D-gluconate + H2O. Catalyzes the dehydration of 6-deoxy-6-sulfo-D-gluconate to 2-dehydro-3,6-dideoxy-6-sulfo-D-gluconate. Is involved in a degradation pathway of sulfoquinovose (SQ) that allows P.putida SQ1 to use SQ as the sole carbon and energy source for growth. The chain is 6-deoxy-6-sulfo-D-gluconate dehydratase from Pseudomonas putida (Arthrobacter siderocapsulatus).